Here is a 340-residue protein sequence, read N- to C-terminus: Deubiquitinase SseL (340 aa).

The active site involves histidine 223. Catalysis depends on cysteine 285, which acts as the Nucleophile.

The protein belongs to the peptidase C79 family.

Its subcellular location is the secreted. The protein localises to the host cytoplasm. Functionally, effector proteins function to alter host cell physiology and promote bacterial survival in host tissues. This protease targets the host cell ubiquitin pathway by acting as a deubiquitinase in infected host cells. The polypeptide is Deubiquitinase SseL (sseL) (Salmonella paratyphi B (strain ATCC BAA-1250 / SPB7)).